A 463-amino-acid chain; its full sequence is Sialic acid-binding Ig-like lectin 9 (463 aa).

A signal peptide spans 1-17; the sequence is MLLLLLPLLWGRERAEG. The Extracellular segment spans residues 18–348; it reads QTSKLLTMQS…SKATSGVTQG (331 aa). Residues 20 to 140 enclose the Ig-like V-type domain; the sequence is SKLLTMQSSV…KHHRLSVNVT (121 aa). Cystine bridges form between Cys36–Cys170, Cys41–Cys102, and Cys164–Cys213. N-linked (GlcNAc...) asparagine glycosylation is present at Asn101. Position 120 (Arg120) interacts with N-acetylneuraminate. Asn138 and Asn161 each carry an N-linked (GlcNAc...) asparagine glycan. The Ig-like C2-type 1 domain maps to 146–229; the sequence is PNILIPGTLE…ASVTTNKTVH (84 aa). N-linked (GlcNAc...) asparagine glycosylation is found at Asn225, Asn231, Asn238, and Asn256. The region spanning 236-336 is the Ig-like C2-type 2 domain; the sequence is PQNLTMTVFQ…GSQQVYLNVS (101 aa). A disulfide bridge connects residues Cys272 and Cys320. A glycan (N-linked (GlcNAc...) asparagine) is linked at Asn334. The helical transmembrane segment at 349-369 threads the bilayer; it reads VVGGAGATALVFLSFCVIFVV. The Cytoplasmic segment spans residues 370 to 463; sequence VRSCRKKSAR…TEYSEIKIHR (94 aa). Residues 380–428 form a disordered region; it reads PAAGVGDTGIEDANAVRGSASQGPLTEPWAEDSPPDQPPPASARSSVGE. Residues 431–436 carry the ITIM motif motif; the sequence is LQYASL. A disordered region spans residues 444-463; the sequence is WDSRGQEATDTEYSEIKIHR. An SLAM-like motif motif is present at residues 454–459; the sequence is TEYSEI.

This sequence belongs to the immunoglobulin superfamily. SIGLEC (sialic acid binding Ig-like lectin) family. Expressed by peripheral blood leukocytes (neutrophils and monocytes but not eosinophils). Found in liver, fetal liver, bone marrow, placenta, spleen and in lower levels in skeletal muscle, fetal brain, stomach, lung, thymus, prostate, brain, mammary, adrenal gland, colon, trachea, cerebellum, testis, small intestine and spinal cordon.

The protein localises to the membrane. In terms of biological role, putative adhesion molecule that mediates sialic-acid dependent binding to cells. Preferentially binds to alpha-2,3- or alpha-2,6-linked sialic acid. The sialic acid recognition site may be masked by cis interactions with sialic acids on the same cell surface. The protein is Sialic acid-binding Ig-like lectin 9 (SIGLEC9) of Homo sapiens (Human).